We begin with the raw amino-acid sequence, 144 residues long: Maximins 11/H11 (144 aa).

Residues 1 to 18 (MNFKYIVAVSFLIASAYA) form the signal peptide. Positions 19–43 (RSEENDEQSLSQRDVLEEESLREIR) are excised as a propeptide. Asn-70 carries the asparagine amide modification. Positions 74 to 123 (TAEDHEVMKRLEAVMRDLDSLDYPEEASERETRGFNQEEIANLFTKKEKR) are excised as a propeptide. Position 143 is an isoleucine amide (Ile-143).

It belongs to the bombinin family. In terms of tissue distribution, expressed by the skin glands.

It is found in the secreted. Maximin-11 shows antimicrobial activity against bacteria and against the fungus C.albicans. It has little hemolytic activity. In terms of biological role, maximin-H11 shows antimicrobial activity against bacteria and against the fungus C.albicans. Shows strong hemolytic activity. In Bombina maxima (Giant fire-bellied toad), this protein is Maximins 11/H11.